Consider the following 146-residue polypeptide: UPF0310 protein YdcG (146 aa).

Belongs to the UPF0310 family.

In Bacillus subtilis (strain 168), this protein is UPF0310 protein YdcG (ydcG).